Consider the following 394-residue polypeptide: Nuclear pore glycoprotein p62 (394 aa).

Repeat copies occupy residues 22 to 23, 50 to 51, 75 to 76, 77 to 78, and 116 to 117. Positions 22–117 are 5 X 2 AA repeats of F-G; the sequence is FGLSTGTPAA…GTSAAPPAFG (96 aa). Positions 45–57 are enriched in low complexity; the sequence is KTTFSFGTPAPTA. The tract at residues 45–73 is disordered; it reads KTTFSFGTPAPTAGIGGGDADNSKAQAPP. Positions 211-341 form a coiled coil; sequence SYHQLEEHIN…DNLNEANKGQ (131 aa).

This sequence belongs to the nucleoporin NSP1/NUP62 family. As to expression, expressed in adult male accessory glands (at protein level).

The protein localises to the nucleus. It is found in the chromosome. The protein resides in the nucleus envelope. Its subcellular location is the nuclear pore complex. It localises to the cytoplasm. The protein localises to the cytoskeleton. It is found in the spindle pole. The protein resides in the microtubule organizing center. Its subcellular location is the centrosome. In terms of biological role, essential component of the nuclear pore complex. The N-terminal is probably involved in nucleocytoplasmic transport. The C-terminal is involved in protein-protein interaction probably via coiled-coil formation, promotes its association with centrosomes and may function in anchorage of Nup62 to the pore complex. Binds to transcriptionally active genes. Negatively regulates chromatin attachment to the nuclear envelope, probably by preventing chromatin tethering by Nup154. This Drosophila melanogaster (Fruit fly) protein is Nuclear pore glycoprotein p62.